Here is a 313-residue protein sequence, read N- to C-terminus: Ribose 1,5-bisphosphate isomerase (313 aa).

Substrate contacts are provided by residues 17–20 (RGAA) and Arg57. The active-site Proton acceptor is the Cys121. The active-site Proton donor is Asp190. Residues 200–201 (NK) and Lys226 contribute to the substrate site.

It belongs to the eIF-2B alpha/beta/delta subunits family. R15P isomerase subfamily.

The enzyme catalyses alpha-D-ribose 1,5-bisphosphate = D-ribulose 1,5-bisphosphate. Functionally, catalyzes the isomerization of ribose 1,5-bisphosphate (R15P) to ribulose 1,5-bisphosphate (RuBP), the CO(2) acceptor and substrate for RubisCO. Functions in an archaeal AMP degradation pathway, together with AMP phosphorylase and RubisCO. In Archaeoglobus fulgidus (strain ATCC 49558 / DSM 4304 / JCM 9628 / NBRC 100126 / VC-16), this protein is Ribose 1,5-bisphosphate isomerase.